Reading from the N-terminus, the 436-residue chain is Transcription factor MYB124 (436 aa).

Residues 1–11 (MEDTKKKKKKN) show a composition bias toward basic residues. Residues 1-23 (MEDTKKKKKKNINNNQDSKKKER) form a disordered region. The short motif at 8-15 (KKKNINNN) is the Nuclear localization signal 1 element. HTH myb-type domains are found at residues 20–71 (KKER…YTYL) and 72–126 (NSDF…KKRA). 2 consecutive DNA-binding regions (H-T-H motif) follow at residues 48 to 71 (WAII…YTYL) and 99 to 122 (WTEI…TTLC). Positions 151–158 (PRKSENET) match the Nuclear localization signal 2 motif. Residues 309–328 (SWRQPDLHDSPASSEYSSGS) form a disordered region. The segment covering 319–328 (PASSEYSSGS) has biased composition (polar residues).

As to quaternary structure, interacts with RBR1. Expressed in all shoot organs with higher levels in leaves, stems, flowers, siliques and floral buds. Also detected in roots tips.

It is found in the nucleus. In terms of biological role, transcription factor that binds to DNA in promoters cis-regulatory element 5'-GGCGCGC-3' of cell cycle genes, including cyclins, cyclin-dependent kinases (CDKs), and components of the pre-replication complex. Binds to DNA in promoters cis-regulatory element 5'-AGCCG-3' of auxin regulated genes (e.g. PIN3 and PIN7). Together with FAMA and MYB88, ensures that stomata contain just two guard cells (GCs) by enforcing a single symmetric precursor cell division before stomatal maturity. Represses the expression of the mitosis-inducing factors CDKB1-1 and CDKA-1, specifically required for the last guard mother cells (GMC) symmetric divisions in the stomatal pathway. Represses CYCA2-3 in newly formed guard cells. Together with MYB88, regulates stomata spacing by restricting divisions late in the stomatal cell lineage thus limiting the number of GMC divisions. In collaboration with CDKB1-1 and CDKB1-2, restrict the G1/S transition and chloroplast and nuclear number during stomatal formation, and normally maintain fate and developmental progression throughout the stomatal cell lineage. Also involved in the shape regulation of pavement cells. Involved in sensing and/or transducing abiotic stress (e.g. drought and salt), probably via the positive regulation of NAC019. Regulates female reproduction being required for entry into megasporogenesis, probably via the regulation of cell cycle genes. Promotes histone H3K27me3 marks and represses stem cell gene expression. Required for lateral roots (LRs) initiation via the regulation of PIN3 expression in an auxin-dependent manner. Involved in responses to gravity stimulation in primary roots by regulating the transcription of PIN3 and PIN7 in gravity-sensing cells, thus modulating auxin asymmetric redistribution. This is Transcription factor MYB124 from Arabidopsis thaliana (Mouse-ear cress).